The sequence spans 338 residues: MLGRCFPPNTKEKQQLRMIKLCDPAESELSPFLITLTLAVLLAEYLTGIIANGFITAIHAAECVQNKSVSTSGRILVFLSVSRIALQSLMMLEITISSTSLSFYSEDTVYYAFKISFIFLNFCSLWFAAWLSFFYFVKIANFSYPLFLKLRWRISGLIPWLLWLSVFISFSHSMFCINICTGYCDNSFPIHSSNSTEKTYFSEISVVSLAFFFNLGIVIPLIMFILAAILLILSLKRHTLYMXSNATGSKDPSMEAHIGAIKATSYFLILYIFNAVALFIYLSNMFDINSLWNTLCQIIMAAYPASHSILLIKDNPGLRRAWKQLQHRLHLYPKEWTL.

Residues 1–30 lie on the Extracellular side of the membrane; the sequence is MLGRCFPPNTKEKQQLRMIKLCDPAESELS. A helical transmembrane segment spans residues 31 to 51; it reads PFLITLTLAVLLAEYLTGIIA. Residues 52 to 74 lie on the Cytoplasmic side of the membrane; the sequence is NGFITAIHAAECVQNKSVSTSGR. The helical transmembrane segment at 75–95 threads the bilayer; sequence ILVFLSVSRIALQSLMMLEIT. Over 96-116 the chain is Extracellular; the sequence is ISSTSLSFYSEDTVYYAFKIS. The helical transmembrane segment at 117-137 threads the bilayer; sequence FIFLNFCSLWFAAWLSFFYFV. The Cytoplasmic portion of the chain corresponds to 138 to 156; it reads KIANFSYPLFLKLRWRISG. Residues 157 to 177 traverse the membrane as a helical segment; that stretch reads LIPWLLWLSVFISFSHSMFCI. At 178 to 205 the chain is on the extracellular side; the sequence is NICTGYCDNSFPIHSSNSTEKTYFSEIS. Asparagine 194 carries N-linked (GlcNAc...) asparagine glycosylation. Residues 206–226 form a helical membrane-spanning segment; that stretch reads VVSLAFFFNLGIVIPLIMFIL. The Cytoplasmic portion of the chain corresponds to 227 to 262; the sequence is AAILLILSLKRHTLYMXSNATGSKDPSMEAHIGAIK. Residues 263–283 traverse the membrane as a helical segment; it reads ATSYFLILYIFNAVALFIYLS. At 284–291 the chain is on the extracellular side; the sequence is NMFDINSL. Residues 292–312 traverse the membrane as a helical segment; the sequence is WNTLCQIIMAAYPASHSILLI. Residues 313-338 are Cytoplasmic-facing; it reads KDNPGLRRAWKQLQHRLHLYPKEWTL.

Belongs to the G-protein coupled receptor T2R family.

The protein localises to the membrane. Its function is as follows. Receptor that may play a role in the perception of bitterness and is gustducin-linked. May play a role in sensing the chemical composition of the gastrointestinal content. The activity of this receptor may stimulate alpha gustducin, mediate PLC-beta-2 activation and lead to the gating of TRPM5. The protein is Taste receptor type 2 member 39 (TAS2R39) of Papio hamadryas (Hamadryas baboon).